A 1016-amino-acid chain; its full sequence is Formate dehydrogenase-O major subunit (1016 aa).

Positions 1–33 form a signal peptide, tat-type signal; it reads MQVSRRQFFKICAGGMAGTTAAALGFAPSVALA. Residues 43–106 form the 4Fe-4S Mo/W bis-MGD-type domain; sequence TRETRNTCTY…GLVDFIHSES (64 aa). 4 residues coordinate [4Fe-4S] cluster: C50, C53, C57, and C92. Position 196 (U196) is a non-standard amino acid, selenocysteine.

This sequence belongs to the prokaryotic molybdopterin-containing oxidoreductase family. As to quaternary structure, formate dehydrogenase is a membrane-bound complex, formed by subunits alpha, beta and gamma. It depends on Mo-bis(molybdopterin guanine dinucleotide) as a cofactor. [4Fe-4S] cluster serves as cofactor. In terms of processing, exported by the Tat system. The position of the signal peptide cleavage has not been experimentally proven.

It is found in the periplasm. It catalyses the reaction formate + NAD(+) = CO2 + NADH. Allows to use formate as major electron donor during aerobic respiration. Subunit alpha possibly forms the active site. This is Formate dehydrogenase-O major subunit (fdoG) from Escherichia coli (strain K12).